The sequence spans 90 residues: MNNSVITVIGKDRVGIVYDVSKILAENRINILNISQQLMDDFFTMIILVDTSKCSKSRQEVLDLFAEESKKLALDIRMQNEEIFQAMHRI.

The ACT domain occupies 5 to 83; it reads VITVIGKDRV…LDIRMQNEEI (79 aa).

This sequence belongs to the UPF0237 family.

The protein is UPF0237 protein NMA1909 of Neisseria meningitidis serogroup A / serotype 4A (strain DSM 15465 / Z2491).